The following is a 95-amino-acid chain: Small ribosomal subunit protein bS18 (95 aa).

Belongs to the bacterial ribosomal protein bS18 family. As to quaternary structure, part of the 30S ribosomal subunit. Forms a tight heterodimer with protein bS6.

In terms of biological role, binds as a heterodimer with protein bS6 to the central domain of the 16S rRNA, where it helps stabilize the platform of the 30S subunit. The sequence is that of Small ribosomal subunit protein bS18 from Rickettsia felis (strain ATCC VR-1525 / URRWXCal2) (Rickettsia azadi).